We begin with the raw amino-acid sequence, 408 residues long: LL-diaminopimelate aminotransferase (408 aa).

Positions 15 and 42 each coordinate substrate. Pyridoxal 5'-phosphate-binding positions include Tyr-72, 108–109 (SK), Tyr-132, Asn-187, Tyr-218, and 246–248 (SFS). Substrate contacts are provided by Lys-109, Tyr-132, and Asn-187. At Lys-249 the chain carries N6-(pyridoxal phosphate)lysine. Pyridoxal 5'-phosphate contacts are provided by Arg-257 and Asn-292. 2 residues coordinate substrate: Asn-292 and Arg-388.

Belongs to the class-I pyridoxal-phosphate-dependent aminotransferase family. LL-diaminopimelate aminotransferase subfamily. In terms of assembly, homodimer. Requires pyridoxal 5'-phosphate as cofactor.

The catalysed reaction is (2S,6S)-2,6-diaminopimelate + 2-oxoglutarate = (S)-2,3,4,5-tetrahydrodipicolinate + L-glutamate + H2O + H(+). Its pathway is amino-acid biosynthesis; L-lysine biosynthesis via DAP pathway; LL-2,6-diaminopimelate from (S)-tetrahydrodipicolinate (aminotransferase route): step 1/1. In terms of biological role, involved in the synthesis of meso-diaminopimelate (m-DAP or DL-DAP), required for both lysine and peptidoglycan biosynthesis. Catalyzes the direct conversion of tetrahydrodipicolinate to LL-diaminopimelate. In Synechococcus sp. (strain RCC307), this protein is LL-diaminopimelate aminotransferase.